The primary structure comprises 157 residues: Pyruvoyl-dependent arginine decarboxylase 1 (157 aa).

Ser41 is modified (pyruvic acid (Ser)).

Belongs to the PdaD family. Requires pyruvate as cofactor.

It catalyses the reaction L-arginine + H(+) = agmatine + CO2. In Archaeoglobus fulgidus (strain ATCC 49558 / DSM 4304 / JCM 9628 / NBRC 100126 / VC-16), this protein is Pyruvoyl-dependent arginine decarboxylase 1 (pdaD1).